A 94-amino-acid chain; its full sequence is C-C motif chemokine 26 (94 aa).

The N-terminal stretch at 1–23 (MMGLSLASAVLLASLLSLHLGTA) is a signal peptide. 2 disulfides stabilise this stretch: Cys-33–Cys-57 and Cys-34–Cys-73.

This sequence belongs to the intercrine beta (chemokine CC) family. In terms of assembly, monomer. In terms of tissue distribution, ubiquitously expressed at low levels in various tissues including heart and ovary.

Its subcellular location is the secreted. Functionally, chemoattractant for eosinophils and basophils. Acts as a ligand for C-C chemokine receptor CCR3 which triggers Ca(2+) mobilization in eosinophils. Also acts as a ligand for CX3C chemokine receptor CX3CR1, inducing cell chemotaxis. This chain is C-C motif chemokine 26, found in Homo sapiens (Human).